Here is a 326-residue protein sequence, read N- to C-terminus: Phenylalanine--tRNA ligase alpha subunit (326 aa).

A Mg(2+)-binding site is contributed by Glu-251.

Belongs to the class-II aminoacyl-tRNA synthetase family. Phe-tRNA synthetase alpha subunit type 1 subfamily. Tetramer of two alpha and two beta subunits. It depends on Mg(2+) as a cofactor.

Its subcellular location is the cytoplasm. The enzyme catalyses tRNA(Phe) + L-phenylalanine + ATP = L-phenylalanyl-tRNA(Phe) + AMP + diphosphate + H(+). The protein is Phenylalanine--tRNA ligase alpha subunit of Alteromonas mediterranea (strain DSM 17117 / CIP 110805 / LMG 28347 / Deep ecotype).